Consider the following 140-residue polypeptide: Organic hydroperoxide resistance protein-like 1 (140 aa).

This sequence belongs to the OsmC/Ohr family.

This Staphylococcus epidermidis (strain ATCC 35984 / DSM 28319 / BCRC 17069 / CCUG 31568 / BM 3577 / RP62A) protein is Organic hydroperoxide resistance protein-like 1.